We begin with the raw amino-acid sequence, 289 residues long: uncharacterized protein (289 aa).

The signal sequence occupies residues 1–19 (MAKWLGAPLARGVSTATRA). 2 helical membrane-spanning segments follow: residues 90–110 (GLLA…GWGV) and 257–277 (AALS…LVFA).

It localises to the cell membrane. This is an uncharacterized protein from Mycobacterium tuberculosis (strain ATCC 25618 / H37Rv).